The sequence spans 215 residues: Fanconi anemia core complex-associated protein 24 (215 aa).

As to quaternary structure, belongs to the multisubunit FA complex composed of FANCA, FANCB, FANCC, FANCE, FANCF, FANCG, FANCL/PHF9, FANCM and FAAP24. Interacts with FANCM.

The protein resides in the nucleus. Functionally, plays a role in DNA repair through recruitment of the FA core complex to damaged DNA. Regulates FANCD2 monoubiquitination upon DNA damage. Induces chromosomal instability as well as hypersensitivity to DNA cross-linking agents, when repressed. Targets FANCM/FAAP24 complex to the DNA, preferentially to single strand DNA. This is Fanconi anemia core complex-associated protein 24 from Bos taurus (Bovine).